The chain runs to 697 residues: Elongation factor G (697 aa).

The tr-type G domain maps to 10-290 (THFRNIGIAA…AVVDYLPSPL (281 aa)). GTP contacts are provided by residues 19-26 (AHIDAGKT), 89-93 (DTPGH), and 143-146 (NKMD).

The protein belongs to the TRAFAC class translation factor GTPase superfamily. Classic translation factor GTPase family. EF-G/EF-2 subfamily.

It is found in the cytoplasm. Its function is as follows. Catalyzes the GTP-dependent ribosomal translocation step during translation elongation. During this step, the ribosome changes from the pre-translocational (PRE) to the post-translocational (POST) state as the newly formed A-site-bound peptidyl-tRNA and P-site-bound deacylated tRNA move to the P and E sites, respectively. Catalyzes the coordinated movement of the two tRNA molecules, the mRNA and conformational changes in the ribosome. The protein is Elongation factor G of Deinococcus deserti (strain DSM 17065 / CIP 109153 / LMG 22923 / VCD115).